The chain runs to 110 residues: Large ribosomal subunit protein uL22 (110 aa).

The protein belongs to the universal ribosomal protein uL22 family. In terms of assembly, part of the 50S ribosomal subunit.

This protein binds specifically to 23S rRNA; its binding is stimulated by other ribosomal proteins, e.g. L4, L17, and L20. It is important during the early stages of 50S assembly. It makes multiple contacts with different domains of the 23S rRNA in the assembled 50S subunit and ribosome. Its function is as follows. The globular domain of the protein is located near the polypeptide exit tunnel on the outside of the subunit, while an extended beta-hairpin is found that lines the wall of the exit tunnel in the center of the 70S ribosome. This chain is Large ribosomal subunit protein uL22, found in Halorhodospira halophila (strain DSM 244 / SL1) (Ectothiorhodospira halophila (strain DSM 244 / SL1)).